The following is a 492-amino-acid chain: Aspartate aminotransferase (492 aa).

Residues 1 to 66 (MMSASFKCPV…KGSCCLFNIR (66 aa)) constitute a chloroplast transit peptide. Positions 119, 206, and 256 each coordinate L-aspartate. An N6-(pyridoxal phosphate)lysine modification is found at lysine 319. Position 458 (arginine 458) interacts with L-aspartate.

The protein belongs to the class-I pyridoxal-phosphate-dependent aminotransferase family. Homodimer. Pyridoxal 5'-phosphate is required as a cofactor.

It localises to the plastid. It is found in the chloroplast. The catalysed reaction is L-aspartate + 2-oxoglutarate = oxaloacetate + L-glutamate. Its function is as follows. Prokaryotic-type aspartate aminotransferase. Specific for aspartate and no activity with glutamine, asparagine, alanine, histidine, leucine, methionine, lysine, arginine, tryptophan, tyrosine, phenylalanine or kynurenine. In Pinus pinaster (Maritime pine), this protein is Aspartate aminotransferase (AAT).